Here is a 165-residue protein sequence, read N- to C-terminus: Ubiquitin-like protein ISG15 (165 aa).

Ubiquitin-like domains lie at 2-78 (GWDL…VDKC) and 79-157 (DEPL…LRGG). Cysteine 78 is subject to S-nitrosocysteine; alternate. Positions 152-157 (LRLRGG) match the LRLRGG motif. An involved in the ligation of specific target proteins region spans residues 153–157 (RLRGG). A Glycyl lysine isopeptide (Gly-Lys) (interchain with K-? in acceptor proteins) cross-link involves residue glycine 157. A propeptide spans 158-165 (GTEPGGRS) (removed in mature form).

Homodimer; disulfide-linked. Interacts with, and is conjugated to its targets by UBE1L (E1 enzyme) and UBE2E2 (E2 enzyme). Interacts with NEDD4. Interacts with PARP12; this interaction inhibits PINK1/Parkin-dependent mitophagy. In terms of assembly, (Microbial infection) Interacts with vaccinia virus protein E3. As to quaternary structure, (Microbial infection) Interaction with influenza B NS1 protein inhibits its conjugation. (Microbial infection) Interacts (via C-terminus) with Crimean-Congo hemorrhagic fever virus (CCHFV) RNA-directed RNA polymerase L (via N-terminus); the deISGylase activity of the viral protein interferes with antiviral signaling pathways mediated by NF-kappaB and IRF signalings. In terms of assembly, (Microbial infection) Interacts with human cytomegalovirus protein UL26; this interaction inhibits global protein ISGylation. Post-translationally, S-nitrosylation decreases its dimerization, thereby increasing the availability as well as the solubility of monomeric ISG15 for its conjugation to cellular proteins. Induced as an inactive, precursor protein that is cleaved by specific proteases to expose the C-terminal diglycine (LRLRGG) motif. This motif is essential not only for its conjugation to substrates but also for its recognition by the relevant processing proteases. Detected in lymphoid cells, striated and smooth muscle, several epithelia and neurons. Expressed in neutrophils, monocytes and lymphocytes. Enhanced expression seen in pancreatic adenocarcinoma, endometrial cancer, and bladder cancer, as compared to non-cancerous tissue. In bladder cancer, the increase in expression exhibits a striking positive correlation with more advanced stages of the disease.

The protein localises to the cytoplasm. It is found in the secreted. Its function is as follows. Ubiquitin-like protein which plays a key role in the innate immune response to viral infection either via its conjugation to a target protein (ISGylation) or via its action as a free or unconjugated protein. ISGylation involves a cascade of enzymatic reactions involving E1, E2, and E3 enzymes which catalyze the conjugation of ISG15 to a lysine residue in the target protein. Its target proteins include IFIT1, MX1/MxA, PPM1B, UBE2L6, UBA7, CHMP5, CHMP2A, CHMP4B and CHMP6. Isgylation of the viral sensor IFIH1/MDA5 promotes IFIH1/MDA5 oligomerization and triggers activation of innate immunity against a range of viruses, including coronaviruses, flaviviruses and picornaviruses. Can also isgylate: EIF2AK2/PKR which results in its activation, RIGI which inhibits its function in antiviral signaling response, EIF4E2 which enhances its cap structure-binding activity and translation-inhibition activity, UBE2N and UBE2E1 which negatively regulates their activity, IRF3 which inhibits its ubiquitination and degradation and FLNB which prevents its ability to interact with the upstream activators of the JNK cascade thereby inhibiting IFNA-induced JNK signaling. Exhibits antiviral activity towards both DNA and RNA viruses, including influenza A, HIV-1 and Ebola virus. Restricts HIV-1 and ebola virus via disruption of viral budding. Inhibits the ubiquitination of HIV-1 Gag and host TSG101 and disrupts their interaction, thereby preventing assembly and release of virions from infected cells. Inhibits Ebola virus budding mediated by the VP40 protein by disrupting ubiquitin ligase activity of NEDD4 and its ability to ubiquitinate VP40. ISGylates influenza A virus NS1 protein which causes a loss of function of the protein and the inhibition of virus replication. The secreted form of ISG15 can: induce natural killer cell proliferation, act as a chemotactic factor for neutrophils and act as a IFN-gamma-inducing cytokine playing an essential role in antimycobacterial immunity. The secreted form acts through the integrin ITGAL/ITGB2 receptor to initiate activation of SRC family tyrosine kinases including LYN, HCK and FGR which leads to secretion of IFNG and IL10; the interaction is mediated by ITGAL. The protein is Ubiquitin-like protein ISG15 of Homo sapiens (Human).